A 149-amino-acid chain; its full sequence is UPF0310 protein SSO2595 (149 aa).

Belongs to the UPF0310 family.

The chain is UPF0310 protein SSO2595 from Saccharolobus solfataricus (strain ATCC 35092 / DSM 1617 / JCM 11322 / P2) (Sulfolobus solfataricus).